A 162-amino-acid chain; its full sequence is MEGSDNTNTHCWICKDEYNVSTNFCNCKNEFKIVHKNCLEEWINFSHNTKCKICNGKYNIKKNKKSCLRWKCSFMYCNVPAICVSLICLLLLPLTILLVKFNLKSMLENIENRDLIALISAMAYSLPCVVGFITVVHILIALYDYYLAAKSDNTTYQVYEYI.

Residues 1-78 (MEGSDNTNTH…RWKCSFMYCN (78 aa)) are Cytoplasmic-facing. The segment at 3-61 (GSDNTNTHCWICKDEYNVSTNFCNCKNEFKIVHKNCLEEWINFSHNTKCKICNGKYNIK) adopts an RING-CH-type zinc-finger fold. Zn(2+) contacts are provided by C11, C14, C25, C27, H35, C38, C51, and C54. A helical transmembrane segment spans residues 79–99 (VPAICVSLICLLLLPLTILLV). Residues 100 to 121 (KFNLKSMLENIENRDLIALISA) are Lumenal-facing. Residues 122–142 (MAYSLPCVVGFITVVHILIAL) traverse the membrane as a helical segment. The Cytoplasmic portion of the chain corresponds to 143–162 (YDYYLAAKSDNTTYQVYEYI).

Belongs to the poxviridae LAP protein family.

It is found in the host membrane. It localises to the host Golgi apparatus. The protein localises to the host trans-Golgi network membrane. Its subcellular location is the host early endosome membrane. It carries out the reaction S-ubiquitinyl-[E2 ubiquitin-conjugating enzyme]-L-cysteine + [acceptor protein]-L-lysine = [E2 ubiquitin-conjugating enzyme]-L-cysteine + N(6)-ubiquitinyl-[acceptor protein]-L-lysine.. In terms of biological role, E3 ubiquitin-protein ligase which promotes ubiquitination and subsequent degradation of host MHC-I and CD4 molecules, presumably to prevent lysis of infected cells by cytotoxic T-lymphocytes and NK cell. Binds target molecules through transmembrane interaction. The result of this ubiquitination is the enhancement of the endocytosis of the target chain and the delivery to the lysosome, where it is proteolytically destroyed. The polypeptide is E3 ubiquitin-protein ligase LAP (LW010) (Lumpy skin disease virus (LSDV)).